The primary structure comprises 881 residues: Envelope glycoprotein gp160 (881 aa).

An N-terminal signal peptide occupies residues 1-19 (MGCLGNQLLIAILLLSVYG). Over 20–696 (IYCTQYVTVF…ASWIKYIQYG (677 aa)) the chain is Extracellular. An N-linked (GlcNAc...) asparagine; by host glycan is attached at Asn37. A disulfide bond links Cys44 and Cys57. 17 N-linked (GlcNAc...) asparagine; by host glycosylation sites follow: Asn70, Asn114, Asn148, Asn158, Asn186, Asn200, Asn204, Asn214, Asn246, Asn249, Asn280, Asn286, Asn297, Asn308, Asn318, Asn373, and Asn379. 5 disulfide bridges follow: Cys101/Cys222, Cys108/Cys213, Cys113/Cys170, Cys235/Cys265, and Cys245/Cys257. Positions 113–169 (CNKSETDRWGLTKSSTTITTAAPTSAPVSEKIDMVNETSSCIAQNNCTGLEQEQMIS) are V1. Residues 170 to 213 (CKFTMTGLKRDKTKEYNETWYSTDLVCEQGNSTDNESRCYMNHC) are V2. The tract at residues 313–345 (CRRPGNKTVLPVTIMSGLVFHSQPINDRPKQAW) is V3. The cysteines at positions 313 and 346 are disulfide-linked. Intrachain disulfides connect Cys397-Cys461 and Cys404-Cys434. The interval 404 to 434 (CKMNWFLNWVEDRDVTTQRPKERHRRNYVPC) is V4. 2 N-linked (GlcNAc...) asparagine; by host glycosylation sites follow: Asn462 and Asn478. Positions 477 to 484 (GNQTSITM) are V5. Positions 528–548 (GVFVLGFLGFLATAGSAMGAA) are fusion peptide. Residues 591–607 (LQTRVTAIEKYLKDQAQ) are immunosuppression. N-linked (GlcNAc...) asparagine; by host glycans are attached at residues Asn627, Asn636, and Asn652. Positions 636–668 (NDTWQEWERKVDFLEENITALLEEAQIQQEKNM) form a coiled coil. Residues 673–694 (KLNSWDVFGNWFDLASWIKYIQ) form an MPER; binding to GalCer region. Residues 697–717 (IYVVVGVILLRIVIYIVQMLA) form a helical membrane-spanning segment. Residues 718-881 (KLRQGYRPVF…IRQGLELTLL (164 aa)) lie on the Cytoplasmic side of the membrane. Positions 723–726 (YRPV) match the YXXV motif; contains endocytosis signal motif. Residues 737-761 (THTQQDPALPTREGKEGDGGEGGGN) form a disordered region. The S-palmitoyl cysteine; by host moiety is linked to residue Cys789. The Di-leucine internalization motif signature appears at 880 to 881 (LL).

In terms of assembly, the mature envelope protein (Env) consists of a homotrimer of non-covalently associated gp120-gp41 heterodimers. The resulting complex protrudes from the virus surface as a spike. Interacts with host CD4 and CCR5. Gp120 also interacts with the C-type lectins CD209/DC-SIGN and CLEC4M/DC-SIGNR (collectively referred to as DC-SIGN(R)). As to quaternary structure, the mature envelope protein (Env) consists of a homotrimer of non-covalently associated gp120-gp41 heterodimers. The resulting complex protrudes from the virus surface as a spike. In terms of processing, specific enzymatic cleavages in vivo yield mature proteins. Envelope glycoproteins are synthesized as an inactive precursor that is heavily N-glycosylated and processed likely by host cell furin in the Golgi to yield the mature SU and TM proteins. The cleavage site between SU and TM requires the minimal sequence [KR]-X-[KR]-R. Post-translationally, palmitoylation of the transmembrane protein and of Env polyprotein (prior to its proteolytic cleavage) is essential for their association with host cell membrane lipid rafts. Palmitoylation is therefore required for envelope trafficking to classical lipid rafts, but not for viral replication.

It is found in the virion membrane. The protein resides in the host cell membrane. It localises to the host endosome membrane. In terms of biological role, the surface protein gp120 (SU) attaches the virus to the host lymphoid cell by binding to the primary receptor CD4. This interaction induces a structural rearrangement creating a high affinity binding site for a chemokine coreceptor like CCR5. This peculiar 2 stage receptor-interaction strategy allows gp120 to maintain the highly conserved coreceptor-binding site in a cryptic conformation, protected from neutralizing antibodies. These changes are transmitted to the transmembrane protein gp41 and are thought to activate its fusogenic potential by unmasking its fusion peptide. Its function is as follows. Surface protein gp120 (SU) may target the virus to gut-associated lymphoid tissue (GALT) by binding host ITGA4/ITGB7 (alpha-4/beta-7 integrins), a complex that mediates T-cell migration to the GALT. Interaction between gp120 and ITGA4/ITGB7 would allow the virus to enter GALT early in the infection, infecting and killing most of GALT's resting CD4+ T-cells. This T-cell depletion is believed to be the major insult to the host immune system leading to AIDS. Functionally, the surface protein gp120 is a ligand for CD209/DC-SIGN and CLEC4M/DC-SIGNR, which are respectively found on dendritic cells (DCs), and on endothelial cells of liver sinusoids and lymph node sinuses. These interactions allow capture of viral particles at mucosal surfaces by these cells and subsequent transmission to permissive cells. DCs are professional antigen presenting cells, critical for host immunity by inducing specific immune responses against a broad variety of pathogens. They act as sentinels in various tissues where they take up antigen, process it, and present it to T-cells following migration to lymphoid organs. SIV subverts the migration properties of dendritic cells to gain access to CD4+ T-cells in lymph nodes. Virus transmission to permissive T-cells occurs either in trans (without DCs infection, through viral capture and transmission), or in cis (following DCs productive infection, through the usual CD4-gp120 interaction), thereby inducing a robust infection. In trans infection, bound virions remain infectious over days and it is proposed that they are not degraded, but protected in non-lysosomal acidic organelles within the DCs close to the cell membrane thus contributing to the viral infectious potential during DCs' migration from the periphery to the lymphoid tissues. On arrival at lymphoid tissues, intact virions recycle back to DCs' cell surface allowing virus transmission to CD4+ T-cells. Virion capture also seems to lead to MHC-II-restricted viral antigen presentation, and probably to the activation of SIV-specific CD4+ cells. The transmembrane protein gp41 (TM) acts as a class I viral fusion protein. Under the current model, the protein has at least 3 conformational states: pre-fusion native state, pre-hairpin intermediate state, and post-fusion hairpin state. During fusion of viral and target intracellular membranes, the coiled coil regions (heptad repeats) assume a trimer-of-hairpins structure, positioning the fusion peptide in close proximity to the C-terminal region of the ectodomain. The formation of this structure appears to drive apposition and subsequent fusion of viral and target cell membranes. Complete fusion occurs in host cell endosomes. The virus undergoes clathrin-dependent internalization long before endosomal fusion, thus minimizing the surface exposure of conserved viral epitopes during fusion and reducing the efficacy of inhibitors targeting these epitopes. Membranes fusion leads to delivery of the nucleocapsid into the cytoplasm. In terms of biological role, the envelope glycoprotein gp160 precursor down-modulates cell surface CD4 antigen by interacting with it in the endoplasmic reticulum and blocking its transport to the cell surface. Its function is as follows. The gp120-gp41 heterodimer allows rapid transcytosis of the virus through CD4 negative cells such as simple epithelial monolayers of the intestinal, rectal and endocervical epithelial barriers. Both gp120 and gp41 specifically recognize glycosphingolipids galactosyl-ceramide (GalCer) or 3' sulfo-galactosyl-ceramide (GalS) present in the lipid rafts structures of epithelial cells. Binding to these alternative receptors allows the rapid transcytosis of the virus through the epithelial cells. This transcytotic vesicle-mediated transport of virions from the apical side to the basolateral side of the epithelial cells does not involve infection of the cells themselves. This chain is Envelope glycoprotein gp160 (env), found in Cercopithecidae (Old World monkeys).